The primary structure comprises 55 residues: MAKTNTVQIKLVSTADTGFFYVTKKNAKAQTGKLEFRKYDPVARKHVTFKEAKIK.

The protein belongs to the bacterial ribosomal protein bL33 family.

The polypeptide is Large ribosomal subunit protein bL33 (Acidiphilium cryptum (strain JF-5)).